Reading from the N-terminus, the 328-residue chain is Lipoyl synthase (328 aa).

Cys56, Cys61, Cys67, Cys82, Cys86, Cys89, and Ser298 together coordinate [4Fe-4S] cluster. A Radical SAM core domain is found at 68–287 (WEDREATFLI…KEEAEEIGFS (220 aa)).

It belongs to the radical SAM superfamily. Lipoyl synthase family. The cofactor is [4Fe-4S] cluster.

The protein resides in the cytoplasm. The catalysed reaction is [[Fe-S] cluster scaffold protein carrying a second [4Fe-4S](2+) cluster] + N(6)-octanoyl-L-lysyl-[protein] + 2 oxidized [2Fe-2S]-[ferredoxin] + 2 S-adenosyl-L-methionine + 4 H(+) = [[Fe-S] cluster scaffold protein] + N(6)-[(R)-dihydrolipoyl]-L-lysyl-[protein] + 4 Fe(3+) + 2 hydrogen sulfide + 2 5'-deoxyadenosine + 2 L-methionine + 2 reduced [2Fe-2S]-[ferredoxin]. It functions in the pathway protein modification; protein lipoylation via endogenous pathway; protein N(6)-(lipoyl)lysine from octanoyl-[acyl-carrier-protein]: step 2/2. Catalyzes the radical-mediated insertion of two sulfur atoms into the C-6 and C-8 positions of the octanoyl moiety bound to the lipoyl domains of lipoate-dependent enzymes, thereby converting the octanoylated domains into lipoylated derivatives. This chain is Lipoyl synthase, found in Streptomyces avermitilis (strain ATCC 31267 / DSM 46492 / JCM 5070 / NBRC 14893 / NCIMB 12804 / NRRL 8165 / MA-4680).